Here is a 462-residue protein sequence, read N- to C-terminus: HEPACAM family member 2 (462 aa).

Positions 1-31 (MGQDAFMEPFGDTLGVFQCKIYLLLFGACSG) are cleaved as a signal peptide. N-linked (GlcNAc...) asparagine glycosylation is found at N85, N129, and N165. 2 Ig-like C2-type domains span residues 149–233 (PVVQ…SDII) and 235–331 (PIIY…THFT). 2 disulfides stabilise this stretch: C170–C219 and C270–C315. An N-linked (GlcNAc...) asparagine glycan is attached at N320. The helical transmembrane segment at 352-372 (LASITGISLFLIISMCLLFLW) threads the bilayer. Topologically, residues 373 to 462 (KKYQPYKVIK…IPAQQQDHPE (90 aa)) are cytoplasmic.

Post-translationally, poly-ADP-ribosylated (PARsylated) by tankyrase TNKS during late G2 and prophase, leading to translocation to mitotic centrosomes. N-glycosylated. As to expression, widely expressed.

Its subcellular location is the golgi apparatus membrane. It is found in the cytoplasm. It localises to the cytoskeleton. The protein resides in the spindle. The protein localises to the microtubule organizing center. Its subcellular location is the centrosome. It is found in the midbody. Its function is as follows. Required during prometaphase for centrosome maturation. Following poly-ADP-ribosylation (PARsylation) by TNKS, translocates from the Golgi apparatus to mitotic centrosomes and plays a key role in the formation of robust microtubules for prompt movement of chromosomes: anchors AKAP9/CG-NAP, a scaffold protein of the gamma-tubulin ring complex and promotes centrosome maturation. The sequence is that of HEPACAM family member 2 (HEPACAM2) from Homo sapiens (Human).